Reading from the N-terminus, the 514-residue chain is 2,3-bisphosphoglycerate-independent phosphoglycerate mutase (514 aa).

Asp-14 and Ser-64 together coordinate Mn(2+). Ser-64 serves as the catalytic Phosphoserine intermediate. Substrate-binding positions include His-125, 155–156 (RD), Arg-187, Arg-193, 263–266 (RADR), and Lys-337. 5 residues coordinate Mn(2+): Asp-404, His-408, Asp-445, His-446, and His-464.

It belongs to the BPG-independent phosphoglycerate mutase family. In terms of assembly, monomer. Requires Mn(2+) as cofactor.

The enzyme catalyses (2R)-2-phosphoglycerate = (2R)-3-phosphoglycerate. It functions in the pathway carbohydrate degradation; glycolysis; pyruvate from D-glyceraldehyde 3-phosphate: step 3/5. Functionally, catalyzes the interconversion of 2-phosphoglycerate and 3-phosphoglycerate. This chain is 2,3-bisphosphoglycerate-independent phosphoglycerate mutase, found in Serratia proteamaculans (strain 568).